A 225-amino-acid polypeptide reads, in one-letter code: Uracil-DNA glycosylase (225 aa).

Asp-65 (proton acceptor) is an active-site residue.

Belongs to the uracil-DNA glycosylase (UDG) superfamily. UNG family.

It localises to the cytoplasm. It carries out the reaction Hydrolyzes single-stranded DNA or mismatched double-stranded DNA and polynucleotides, releasing free uracil.. Its function is as follows. Excises uracil residues from the DNA which can arise as a result of misincorporation of dUMP residues by DNA polymerase or due to deamination of cytosine. This is Uracil-DNA glycosylase from Clostridium perfringens (strain ATCC 13124 / DSM 756 / JCM 1290 / NCIMB 6125 / NCTC 8237 / Type A).